The chain runs to 324 residues: Signal peptidase I (324 aa).

The Periplasmic segment spans residues 1–3; it reads MAN. The chain crosses the membrane as a helical span at residues 4-22; the sequence is MFALILVIATLVTGILWCV. The Cytoplasmic portion of the chain corresponds to 23-58; that stretch reads DKFVFAPKRRARQAAAQTASGDALDNATLNKVAPKP. A helical membrane pass occupies residues 59-77; the sequence is GWLETGASVFPVLAIVLIV. Residues 78–324 are Periplasmic-facing; that stretch reads RSFLYEPFQI…VRLSRIGGIH (247 aa). Active-site residues include serine 91 and lysine 146.

The protein belongs to the peptidase S26 family.

It localises to the cell inner membrane. The catalysed reaction is Cleavage of hydrophobic, N-terminal signal or leader sequences from secreted and periplasmic proteins.. In Salmonella typhi, this protein is Signal peptidase I (lepB).